Reading from the N-terminus, the 392-residue chain is Leucine-rich repeat-containing protein 74B (392 aa).

Positions 24–46 are disordered; that stretch reads RLSGVPEAEQGPEANWDSDLETE. 9 LRR repeats span residues 106–129, 134–157, 162–185, 192–213, 220–241, 248–269, 276–297, 304–325, and 334–356; these read NPYVKRLDLRDNGLCGAGAEALAG, SSSIHDVDLSENQLGVAGAQALCA, NQAMRKMQLSGNGLEEQAAQHLAE, DLKSLDLSYNQLNDQAGETLGP, GLTELNVSWNHLRGPGAVAFAR, FLKVLDISYNGFGDPGASAVGE, VLEELNMSNNRISAMGALSLGL, TLRILVVSRNPMRSEGCFGLLK, and ALELLDFSDIQVNAEFDGLASSV.

This is Leucine-rich repeat-containing protein 74B from Homo sapiens (Human).